A 308-amino-acid polypeptide reads, in one-letter code: Taste receptor type 2 member 107 (308 aa).

Over 1–7 (MLNSAEG) the chain is Extracellular. The chain crosses the membrane as a helical span at residues 8–28 (ILLCVVTSEAVLGVLGDTYIA). Residues 29–43 (LFNCMDYAKNKKLSK) lie on the Cytoplasmic side of the membrane. The helical transmembrane segment at 44–64 (IGFILIGLAISRIGVVWIIIL) threads the bilayer. Residues 65-87 (QGYIQVFFPHMLTSGNITEYITY) lie on the Extracellular side of the membrane. A glycan (N-linked (GlcNAc...) asparagine) is linked at asparagine 80. Residues 88–108 (IWVFLNHLSVWFVTNLNILYF) form a helical membrane-spanning segment. Over 109–125 (LKIANFSNSVFLWLKRR) the chain is Cytoplasmic. A helical transmembrane segment spans residues 126–146 (VNAVFIFLSGCLLTSWLLCFP). Topologically, residues 147-180 (QMTKILQNSKMHQRNTSWVHQRKNYFLINQSVTN) are extracellular. Asparagine 161 and asparagine 175 each carry an N-linked (GlcNAc...) asparagine glycan. Residues 181 to 201 (LGIFFFIIVSLITCFLLIVFL) traverse the membrane as a helical segment. Topologically, residues 202 to 232 (WRHVRQMHSDVSGFRDHSTKVHVKAMKFLIS) are cytoplasmic. A helical transmembrane segment spans residues 233-253 (FMVFFILHFVGLSIEVLCFIL). At 254–258 (PQNKL) the chain is on the extracellular side. The helical transmembrane segment at 259 to 279 (LFITGLTATCLYPCGHSIIVI) threads the bilayer. Residues 280 to 308 (LGNKQLKQASLKALQQLKCCETKGNFRVK) are Cytoplasmic-facing.

Belongs to the G-protein coupled receptor T2R family.

The protein resides in the membrane. Functionally, putative taste receptor which may play a role in the perception of bitterness. This chain is Taste receptor type 2 member 107, found in Mus musculus (Mouse).